A 388-amino-acid polypeptide reads, in one-letter code: Cell adhesion molecule 4 (388 aa).

Residues 1-20 (MGRARRFQWPLLLLWAAAAG) form the signal peptide. The region spanning 21–119 (PGAGQEVQTE…DTHHQIATLT (99 aa)) is the Ig-like V-type domain. Residues 21–324 (PGAGQEVQTE…VEAQTSVPYA (304 aa)) lie on the Extracellular side of the membrane. N-linked (GlcNAc...) asparagine glycosylation is found at Asn-31 and Asn-67. Disulfide bonds link Cys-44–Cys-104, Cys-145–Cys-199, and Cys-245–Cys-291. 2 Ig-like C2-type domains span residues 124–219 (PENP…YVLD) and 224–307 (PTAR…YVLV). Asn-286 carries N-linked (GlcNAc...) asparagine glycosylation. Residues 325–345 (IVGGILALLVFLIICVLVGMV) form a helical membrane-spanning segment. Over 346 to 388 (WCSVRQKGSYLTHEASGLDEQGEAREAFLNGSDGHKRKEEFFI) the chain is Cytoplasmic. Ser-361 is modified (phosphoserine).

This sequence belongs to the nectin family. In terms of assembly, monomer and homodimer. N-glycosylated. As to expression, expressed in brain, prostate, brain, kidney and some other organs.

The protein localises to the membrane. Involved in the cell-cell adhesion. Has calcium- and magnesium-independent cell-cell adhesion activity. May have tumor-suppressor activity. This Homo sapiens (Human) protein is Cell adhesion molecule 4 (CADM4).